The chain runs to 1305 residues: Serine protease EspC (1305 aa).

A signal peptide spans 1 to 53 (MNKIYALKYCHATGGLIAVSELASRVMKKAARGSLLALFNLSLYGAFLSASQA). The Peptidase S6 domain occupies 55-297 (QLNIDNVWAR…SILNQYDENT (243 aa)). Residues H125, D153, and S256 each act as charge relay system in the active site. Residues 1039-1305 (DTQGDAGVWA…AINANFRYSF (267 aa)) form the Autotransporter domain.

In terms of processing, cleaved to release the mature protein from the outer membrane.

It localises to the periplasm. Its subcellular location is the secreted. It is found in the cell surface. The protein resides in the cell outer membrane. Its activity is regulated as follows. Inhibition of cytotoxic activity by phenylmethylsulfonyl fluoride. Serine protease with enterotoxic and cytotoxic activities. Cleaves fodrin, but does not cause its redistribution within epithelial cells. The exact role of EspC in EPEC pathogenesis is still unknown. The protein is Serine protease EspC (espC) of Escherichia coli O127:H6 (strain E2348/69 / EPEC).